Consider the following 489-residue polypeptide: Pluviatolide synthase (489 aa).

Residues 6-26 (SVLGLSSTLIIALAITVIFLL) traverse the membrane as a helical segment. A heme-binding site is contributed by cysteine 432.

This sequence belongs to the cytochrome P450 family. It depends on heme as a cofactor.

The protein resides in the membrane. The enzyme catalyses (-)-matairesinol + reduced [NADPH--hemoprotein reductase] + O2 = (-)-pluviatolide + oxidized [NADPH--hemoprotein reductase] + 2 H2O + H(+). It participates in aromatic compound metabolism; phenylpropanoid biosynthesis. Functionally, cytochrome P450 involved in the biosynthesis of etoposide, a chemotherapeutic compound of the topoisomerase inhibitor family. Catalyzes the conversion of matairesinol to pluviatolide. This Podophyllum peltatum (American mandrake) protein is Pluviatolide synthase.